A 187-amino-acid polypeptide reads, in one-letter code: Hypoxanthine/guanine phosphoribosyltransferase (187 aa).

Belongs to the purine/pyrimidine phosphoribosyltransferase family. Archaeal HPRT subfamily. Homodimer.

The protein localises to the cytoplasm. The enzyme catalyses IMP + diphosphate = hypoxanthine + 5-phospho-alpha-D-ribose 1-diphosphate. The catalysed reaction is GMP + diphosphate = guanine + 5-phospho-alpha-D-ribose 1-diphosphate. The protein operates within purine metabolism; IMP biosynthesis via salvage pathway; IMP from hypoxanthine: step 1/1. Its function is as follows. Catalyzes a salvage reaction resulting in the formation of IMP that is energically less costly than de novo synthesis. The protein is Hypoxanthine/guanine phosphoribosyltransferase of Ferroglobus placidus (strain DSM 10642 / AEDII12DO).